Consider the following 215-residue polypeptide: Probable phosphoglycerate mutase GpmB (215 aa).

Substrate-binding positions include 8-15 (RHGETQWN), 21-22 (QG), arginine 58, lysine 60, 82-85 (ELDM), 104-105 (RR), and 151-152 (GI). The Tele-phosphohistidine intermediate role is filled by histidine 9. The active-site Proton donor/acceptor is the glutamate 82.

It belongs to the phosphoglycerate mutase family. GpmB subfamily.

It carries out the reaction (2R)-2-phosphoglycerate = (2R)-3-phosphoglycerate. It participates in carbohydrate degradation; glycolysis; pyruvate from D-glyceraldehyde 3-phosphate: step 3/5. This is Probable phosphoglycerate mutase GpmB from Salmonella arizonae (strain ATCC BAA-731 / CDC346-86 / RSK2980).